Here is a 303-residue protein sequence, read N- to C-terminus: MNTAHSPDGSGRTGTARVKRGMAEMLKGGVIMDVVTPEQAKIAEGAGAVAVMALERVPADIRAQGGVSRMSDPDMIEGIISAVTIPVMAKARIGHFVEAQILQSLGVDYIDESEVLTPADYTHHIDKWKFTVPFVCGATNLGEALRRINEGAAMIRSKGEAGTGDVSNATTHMRAIGGEIRRLMSLSEDELYVAAKELQAPYELVVEVARAGKLPVTLFTAGGIATPADAAMMMQLGAEGVFVGSGIFKSGDPAQRAAAIVKATTFYDDPDVLAKVSRGLGEAMVGINVEQIAQPERLAERGW.

D33 contacts D-ribose 5-phosphate. Residue K90 is the Schiff-base intermediate with D-ribose 5-phosphate of the active site. G162 serves as a coordination point for D-ribose 5-phosphate. Residue R174 participates in D-glyceraldehyde 3-phosphate binding. Residues G223 and 244 to 245 contribute to the D-ribose 5-phosphate site; that span reads GS.

Belongs to the PdxS/SNZ family. In the presence of PdxT, forms a dodecamer of heterodimers.

The catalysed reaction is aldehydo-D-ribose 5-phosphate + D-glyceraldehyde 3-phosphate + L-glutamine = pyridoxal 5'-phosphate + L-glutamate + phosphate + 3 H2O + H(+). Its pathway is cofactor biosynthesis; pyridoxal 5'-phosphate biosynthesis. In terms of biological role, catalyzes the formation of pyridoxal 5'-phosphate from ribose 5-phosphate (RBP), glyceraldehyde 3-phosphate (G3P) and ammonia. The ammonia is provided by the PdxT subunit. Can also use ribulose 5-phosphate and dihydroxyacetone phosphate as substrates, resulting from enzyme-catalyzed isomerization of RBP and G3P, respectively. In Mycobacterium avium (strain 104), this protein is Pyridoxal 5'-phosphate synthase subunit PdxS.